We begin with the raw amino-acid sequence, 154 residues long: Transcriptional repressor NrdR (154 aa).

A zinc finger spans residues cysteine 3–cysteine 34. The 91-residue stretch at proline 49 to glutamate 139 folds into the ATP-cone domain.

The protein belongs to the NrdR family. Zn(2+) is required as a cofactor.

Negatively regulates transcription of bacterial ribonucleotide reductase nrd genes and operons by binding to NrdR-boxes. The sequence is that of Transcriptional repressor NrdR from Pseudomonas fluorescens (strain ATCC BAA-477 / NRRL B-23932 / Pf-5).